Consider the following 120-residue polypeptide: MKRTGPTDPNLRRLIRYLRKKSNEEKVKIWKDIAWRLERPRRQRAEVNVSRINRYAKDGDMIVVPGSVLGAGKIEKKVIVAAWKFSETARRKIEEAGGEAITIEELIKRNPKGSGVIIME.

It belongs to the eukaryotic ribosomal protein eL18 family.

In Pyrococcus abyssi (strain GE5 / Orsay), this protein is Large ribosomal subunit protein eL18.